The chain runs to 189 residues: dCTP deaminase, dUMP-forming (189 aa).

DCTP-binding positions include 101-106, Asp119, 127-129, Gln148, Tyr162, Lys170, and Gln174; these read KSSLGR and TLE. The active-site Proton donor/acceptor is Glu129. The tract at residues 163–189 is disordered; the sequence is GSGKLGSKYQGQRGPTPSKAYLNFPNK.

This sequence belongs to the dCTP deaminase family. In terms of assembly, homotrimer.

It carries out the reaction dCTP + 2 H2O = dUMP + NH4(+) + diphosphate. Its pathway is pyrimidine metabolism; dUMP biosynthesis; dUMP from dCTP: step 1/1. In terms of biological role, bifunctional enzyme that catalyzes both the deamination of dCTP to dUTP and the hydrolysis of dUTP to dUMP without releasing the toxic dUTP intermediate. This chain is dCTP deaminase, dUMP-forming, found in Corynebacterium glutamicum (strain R).